Here is a 470-residue protein sequence, read N- to C-terminus: Tert-butanol monooxygenase / tert-amyl alcohol desaturase oxygenase subunit (470 aa).

Residues 51 to 155 enclose the Rieske domain; that stretch reads WQPVCLSQEL…AFERNGLVFA (105 aa). [2Fe-2S] cluster-binding residues include cysteine 91, histidine 93, cysteine 110, and histidine 113.

It belongs to the bacterial ring-hydroxylating dioxygenase alpha subunit family. This two-component enzyme is composed of an oxygenase (MdpJ) and a reductase (MdpK). The cofactor is [2Fe-2S] cluster.

It catalyses the reaction tert-butanol + NADPH + O2 + H(+) = 2-methylpropane-1,2-diol + NADP(+) + H2O. The enzyme catalyses 2-methylbutan-2-ol + NADPH + O2 + H(+) = 3-hydroxy-3-methylbut-1-ene + NADP(+) + 2 H2O. Functionally, oxygenase component of a two-component system involved in the degradation of tertiary alcohols such as tert-butyl alcohol (TBA) and tert-amyl alcohol (TAA). In the presence of TBA, catalyzes the hydroxylation of TBA to 2-methylpropane-1,2-diol. In the presence of TAA, functions as a desaturase, enabling the degradation of TAA and resulting in the formation of the hemiterpene 3-hydroxy-3-methylbut-1-ene. The specificity of the catalysis depends strongly on the molecule structure of the substrate, allowing either hydroxylation or desaturation reactions. Also catalyzes the desaturation of the tertiary alcohol 3-methyl-3-pentanol (a C6 homolog of TBA and TAA) to 3-methyl-1-penten-3-ol, with lower efficiency. In addition, can transform some secondary alcohols, including the hydroxylation of 2-propanol to 1,2-propanediol, and the desaturation of 2-butanol, 3-methyl-2-butanol and 3-pentanol. The sequence is that of Tert-butanol monooxygenase / tert-amyl alcohol desaturase oxygenase subunit from Aquincola tertiaricarbonis.